The primary structure comprises 181 residues: Large ribosomal subunit protein uL5c (181 aa).

It belongs to the universal ribosomal protein uL5 family. In terms of assembly, part of the 50S ribosomal subunit; contacts the 5S rRNA.

Its subcellular location is the plastid. The protein localises to the chloroplast. Its function is as follows. Binds 5S rRNA, forms part of the central protuberance of the 50S subunit. This chain is Large ribosomal subunit protein uL5c (rpl5), found in Guillardia theta (Cryptophyte).